We begin with the raw amino-acid sequence, 232 residues long: Cytidylate kinase (232 aa).

10–18 (GPAASGKST) is an ATP binding site.

This sequence belongs to the cytidylate kinase family. Type 1 subfamily.

It localises to the cytoplasm. The catalysed reaction is CMP + ATP = CDP + ADP. It carries out the reaction dCMP + ATP = dCDP + ADP. The polypeptide is Cytidylate kinase (Phytoplasma mali (strain AT)).